Consider the following 264-residue polypeptide: Thymidylate synthase (264 aa).

Arg-21 is a dUMP binding site. Residue His-51 coordinates (6R)-5,10-methylene-5,6,7,8-tetrahydrofolate. Arg-126–Arg-127 lines the dUMP pocket. Cys-146 acts as the Nucleophile in catalysis. DUMP-binding positions include Arg-166–Asp-169, Asn-177, and His-207–Tyr-209. A (6R)-5,10-methylene-5,6,7,8-tetrahydrofolate-binding site is contributed by Asp-169. Ser-263 contributes to the (6R)-5,10-methylene-5,6,7,8-tetrahydrofolate binding site.

This sequence belongs to the thymidylate synthase family. Bacterial-type ThyA subfamily. In terms of assembly, homodimer.

It localises to the cytoplasm. It catalyses the reaction dUMP + (6R)-5,10-methylene-5,6,7,8-tetrahydrofolate = 7,8-dihydrofolate + dTMP. Its pathway is pyrimidine metabolism; dTTP biosynthesis. Its function is as follows. Catalyzes the reductive methylation of 2'-deoxyuridine-5'-monophosphate (dUMP) to 2'-deoxythymidine-5'-monophosphate (dTMP) while utilizing 5,10-methylenetetrahydrofolate (mTHF) as the methyl donor and reductant in the reaction, yielding dihydrofolate (DHF) as a by-product. This enzymatic reaction provides an intracellular de novo source of dTMP, an essential precursor for DNA biosynthesis. This is Thymidylate synthase from Shouchella clausii (strain KSM-K16) (Alkalihalobacillus clausii).